Here is a 106-residue protein sequence, read N- to C-terminus: HIG1 domain family member 2A, mitochondrial (106 aa).

Residue alanine 2 is modified to N-acetylalanine. The HIG1 domain maps to 20–106 (VIEGLSPTVY…LAVTAMKSRP (87 aa)). Helical transmembrane passes span 47-67 (PVVPIGCLATAAALTYGLYSF) and 83-103 (IAAQGFTVAAILLGLAVTAMK). Topologically, residues 104–106 (SRP) are mitochondrial matrix.

In terms of assembly, associates with cytochrome c oxidase (COX, complex IV); proposed complex component.

It localises to the mitochondrion membrane. It is found in the mitochondrion inner membrane. Its function is as follows. Proposed subunit of cytochrome c oxidase (COX, complex IV), which is the terminal component of the mitochondrial respiratory chain that catalyzes the reduction of oxygen to water. May be involved in cytochrome c oxidase activity. May play a role in the assembly of respiratory supercomplexes. This chain is HIG1 domain family member 2A, mitochondrial (HIGD2A), found in Homo sapiens (Human).